The primary structure comprises 428 residues: Cholecystokinin receptor type A (428 aa).

Residues 1–41 (MEVADSLLGNGSDVPPPCELGLENETLVCLEQPRAAKEWQP) are Extracellular-facing. N-linked (GlcNAc...) asparagine glycosylation is found at N10 and N24. Residues C18 and C29 are joined by a disulfide bond. A helical membrane pass occupies residues 42-67 (AVQILLYSLIFLLSVLGNTLVITVLI). Over 68-77 (RNKRMRTVTN) the chain is Cytoplasmic. The helical transmembrane segment at 78 to 104 (IFLLSLAVSDLMLCLFCMPFNLIPNLL) threads the bilayer. Over 105-115 (KDFIFGSAVCK) the chain is Extracellular. The cysteines at positions 114 and 196 are disulfide-linked. The helical transmembrane segment at 116–137 (TTTYFMGTSVSVSTFNLVAISL) threads the bilayer. The Cytoplasmic portion of the chain corresponds to 138–157 (ERYGAICKPLQSRVWQTKSH). A helical transmembrane segment spans residues 158-178 (ALKVIATTWCLSFTIMTPYPI). Topologically, residues 179–210 (YSNLVPFTKTNNQTANMCRFLLPNDVMQQSWH) are extracellular. N190 is a glycosylation site (N-linked (GlcNAc...) asparagine). The helical transmembrane segment at 211 to 234 (TFLLLILFLIPGIVMMVAYGLISL) threads the bilayer. Topologically, residues 235–313 (ELYQGIKFDA…NLMAKKRVIR (79 aa)) are cytoplasmic. Residues 250–269 (ARDRNPSTGSSGRYEDGDGC) form a disordered region. The helical transmembrane segment at 314 to 334 (MLMVIVVLFFLCWMPIFSANA) threads the bilayer. Residues 335 to 349 (WRAYDTASAERRLSG) are Extracellular-facing. A helical transmembrane segment spans residues 350–373 (TPISFILLLSYTSSCVNPIIYCFM). The Cytoplasmic portion of the chain corresponds to 374-428 (NKRFRLGFLATFPCCPHPGPPGPRGEVGEEEEGRTTGASLSRYSYSHMSASAPGP). C387 carries S-palmitoyl cysteine lipidation. Residues 393 to 428 (PPGPRGEVGEEEEGRTTGASLSRYSYSHMSASAPGP) form a disordered region. Residues 409 to 422 (TGASLSRYSYSHMS) show a composition bias toward polar residues.

The protein belongs to the G-protein coupled receptor 1 family.

Its subcellular location is the cell membrane. In terms of biological role, receptor for cholecystokinin. Mediates pancreatic growth and enzyme secretion, smooth muscle contraction of the gall bladder and stomach. Has a 1000-fold higher affinity for CCK rather than for gastrin. It modulates feeding and dopamine-induced behavior in the central and peripheral nervous system. This receptor mediates its action by association with G proteins that activate a phosphatidylinositol-calcium second messenger system. This chain is Cholecystokinin receptor type A (CCKAR), found in Canis lupus familiaris (Dog).